A 718-amino-acid chain; its full sequence is Protein SQS1 (718 aa).

Disordered regions lie at residues 247 to 301 (TTAI…DEDD), 341 to 404 (FALN…GLAR), and 430 to 452 (KRGA…SANA). The segment covering 265–282 (TSLRDDPEVIPVAREKRA) has biased composition (basic and acidic residues). Over residues 283-293 (GRQRSRSKASK) the composition is skewed to basic residues. Residues 375 to 400 (DADEDNGDENDEADEDDDMDADMDDE) are compositionally biased toward acidic residues. Over residues 442–452 (TPSSFAKSANA) the composition is skewed to polar residues. The 63-residue stretch at 537-599 (GLRLEDFKTE…TRRPVLYRSK (63 aa)) folds into the R3H domain. In terms of domain architecture, G-patch spans 673–718 (QENKGRAMLEKMGWSKGMALGALENKGILEPVAQVVKKSKAGLGRT).

Belongs to the SQS1 family.

It is found in the cytoplasm. It localises to the nucleus. In terms of biological role, may be involved in splicing. The polypeptide is Protein SQS1 (SQS1) (Podospora anserina (Pleurage anserina)).